We begin with the raw amino-acid sequence, 231 residues long: GSK-3-binding protein FRAT2 (231 aa).

Disordered stretches follow at residues 1–24 and 53–109; these read MPCR…DDSF and DTAH…PGAV. Acidic residues predominate over residues 7-23; it reads EEEEAGDEAEGEEDDDS. Positions 172–194 are involved in GSK-3 binding; sequence DPHRLLQQLVLSGNLIKEAVRRL. The tract at residues 203-231 is disordered; that stretch reads ATSPASAPGSGGGRSGPDSVTLQPSGAWL.

This sequence belongs to the GSK-3-binding protein family. In terms of assembly, binds GSK-3 and prevents GSK-3-dependent phosphorylation.

Functionally, positively regulates the Wnt signaling pathway by stabilizing beta-catenin through the association with GSK-3. The chain is GSK-3-binding protein FRAT2 (Frat2) from Mus musculus (Mouse).